The following is a 460-amino-acid chain: ATP synthase subunit beta (460 aa).

150–157 (GGAGVGKT) contacts ATP.

Belongs to the ATPase alpha/beta chains family. As to quaternary structure, F-type ATPases have 2 components, CF(1) - the catalytic core - and CF(0) - the membrane proton channel. CF(1) has five subunits: alpha(3), beta(3), gamma(1), delta(1), epsilon(1). CF(0) has three main subunits: a(1), b(2) and c(9-12). The alpha and beta chains form an alternating ring which encloses part of the gamma chain. CF(1) is attached to CF(0) by a central stalk formed by the gamma and epsilon chains, while a peripheral stalk is formed by the delta and b chains.

It localises to the cell inner membrane. It carries out the reaction ATP + H2O + 4 H(+)(in) = ADP + phosphate + 5 H(+)(out). Its function is as follows. Produces ATP from ADP in the presence of a proton gradient across the membrane. The catalytic sites are hosted primarily by the beta subunits. The protein is ATP synthase subunit beta of Salmonella paratyphi A (strain ATCC 9150 / SARB42).